Consider the following 498-residue polypeptide: Glycerol kinase (498 aa).

Residue Thr-12 participates in ADP binding. Positions 12, 13, and 14 each coordinate ATP. Thr-12 serves as a coordination point for sn-glycerol 3-phosphate. Arg-16 serves as a coordination point for ADP. Sn-glycerol 3-phosphate-binding residues include Arg-82, Glu-83, Tyr-134, and Asp-243. Arg-82, Glu-83, Tyr-134, Asp-243, and Gln-244 together coordinate glycerol. 2 residues coordinate ADP: Thr-265 and Gly-308. ATP contacts are provided by Thr-265, Gly-308, Gln-312, and Gly-409. Positions 409 and 413 each coordinate ADP.

It belongs to the FGGY kinase family. In terms of assembly, homotetramer and homodimer (in equilibrium).

The catalysed reaction is glycerol + ATP = sn-glycerol 3-phosphate + ADP + H(+). The protein operates within polyol metabolism; glycerol degradation via glycerol kinase pathway; sn-glycerol 3-phosphate from glycerol: step 1/1. Its activity is regulated as follows. Activated by phosphorylation and inhibited by fructose 1,6-bisphosphate (FBP). In terms of biological role, key enzyme in the regulation of glycerol uptake and metabolism. Catalyzes the phosphorylation of glycerol to yield sn-glycerol 3-phosphate. This is Glycerol kinase from Agathobacter rectalis (strain ATCC 33656 / DSM 3377 / JCM 17463 / KCTC 5835 / VPI 0990) (Eubacterium rectale).